The chain runs to 757 residues: RNA-directed RNA polymerase catalytic subunit (757 aa).

The disordered stretch occupies residues 50-82 (SEKGKWTTNTETGAPQLNPIDGPLPEDNEPSGY). Residues 55–64 (WTTNTETGAP) are compositionally biased toward polar residues. Short sequence motifs (nuclear localization signal) lie at residues 187–195 (RKRRVRDNM) and 203–216 (RTIGKKKQRLNKKS). The segment at 249–256 (RGFVYFVE) is promoter-binding site. The RdRp catalytic domain maps to 286–483 (VRKMMTNSQD…GINMSKKKSY (198 aa)).

This sequence belongs to the influenza viruses polymerase PB1 family. Influenza RNA polymerase is composed of three subunits: PB1, PB2 and PA. Interacts (via N-terminus) with PA (via C-terminus). Interacts (via C-terminus) with PB2 (via N-terminus); this interaction is essential for transcription initiation. In terms of processing, phosphorylated by host PRKCA.

It is found in the host nucleus. The protein localises to the host cytoplasm. It carries out the reaction RNA(n) + a ribonucleoside 5'-triphosphate = RNA(n+1) + diphosphate. Its function is as follows. RNA-dependent RNA polymerase which is responsible for replication and transcription of virus RNA segments. The transcription of viral mRNAs occurs by a unique mechanism called cap-snatching. 5' methylated caps of cellular mRNAs are cleaved after 10-13 nucleotides by PA. In turn, these short capped RNAs are used as primers by PB1 for transcription of viral mRNAs. During virus replication, PB1 initiates RNA synthesis and copy vRNA into complementary RNA (cRNA) which in turn serves as a template for the production of more vRNAs. The sequence is that of RNA-directed RNA polymerase catalytic subunit from Influenza A virus (strain A/Silky Chicken/Hong Kong/SF189/2001 H5N1 genotype A).